The primary structure comprises 293 residues: Phycoerythrin class 2 subunit gamma, linker polypeptide (293 aa).

Cys-49 contacts phycourobilin. The 180-residue stretch at 50-229 (AAMGIGIGPR…LGGMKVAISD (180 aa)) folds into the PBS-linker domain.

Post-translationally, contains one covalently linked phycourobilin chromophore.

The protein resides in the cellular thylakoid membrane. Its function is as follows. This protein is a bile pigment-bearing rod linker polypeptide that associates with C-phycoerythrin. The chain is Phycoerythrin class 2 subunit gamma, linker polypeptide (mpeC) from Synechococcus sp. (strain WH8020).